Reading from the N-terminus, the 194-residue chain is MYLDQIKAELVEAQDLLNKFISDENNIKLIQEAALLISNSFKQGGKVLSCGNGGSHCDAMHFAEELTGRYRENRPGYPAIAISDASHLSCVSNDFGYEYVFSRYVEAVGQKGDVLFGLSTSGNSKNILNAIEAAKTKGMKVIAMTGKDGGKMAGLADVEIRIPHFRYADRIQEIHIKVIHILMMLIEFEMAKQA.

An SIS domain is found at 37–194 (ISNSFKQGGK…LIEFEMAKQA (158 aa)). Residue 52–54 (NGG) coordinates substrate. Residues histidine 61 and glutamate 65 each coordinate Zn(2+). Residues glutamate 65, 93 to 94 (ND), 119 to 121 (STS), serine 124, and glutamine 172 contribute to the substrate site. Residues glutamine 172 and histidine 180 each contribute to the Zn(2+) site.

This sequence belongs to the SIS family. GmhA subfamily. As to quaternary structure, homotetramer. The cofactor is Zn(2+).

It localises to the cytoplasm. It catalyses the reaction 2 D-sedoheptulose 7-phosphate = D-glycero-alpha-D-manno-heptose 7-phosphate + D-glycero-beta-D-manno-heptose 7-phosphate. Its pathway is carbohydrate biosynthesis; D-glycero-D-manno-heptose 7-phosphate biosynthesis; D-glycero-alpha-D-manno-heptose 7-phosphate and D-glycero-beta-D-manno-heptose 7-phosphate from sedoheptulose 7-phosphate: step 1/1. Functionally, catalyzes the isomerization of sedoheptulose 7-phosphate in D-glycero-D-manno-heptose 7-phosphate. The polypeptide is Phosphoheptose isomerase (Haemophilus influenzae (strain PittEE)).